A 54-amino-acid polypeptide reads, in one-letter code: Ferredoxin (54 aa).

2 consecutive 4Fe-4S ferredoxin-type domains span residues 2 to 25 and 26 to 54; these read YVIN…IQQG and SIYA…NPED. The [4Fe-4S] cluster site is built by Cys-8, Cys-11, Cys-14, Cys-18, Cys-35, Cys-38, Cys-41, and Cys-45.

[4Fe-4S] cluster serves as cofactor.

In terms of biological role, ferredoxins are iron-sulfur proteins that transfer electrons in a wide variety of metabolic reactions. The sequence is that of Ferredoxin from Peptoniphilus asaccharolyticus (Peptostreptococcus asaccharolyticus).